The chain runs to 212 residues: MALIDISRSVSPATAVWPGDQEVQWTWTARRNEDESSVNLGSLRLSTHTGTHVDAPLHVKRQGQATDDLPLDSFVGPARVVDVNANAPSVRPEHIGQLDGASAERVLFKTSSGVSPDDEWPDAVVPIQPDTIHALADAGVSLVGTDAPSVDPLDSTDLPAHHALLDTGIVNLEGLVLTNVPPGRYELIALPLKIVGGDAAPVRAVLRDAPDP.

A substrate-binding site is contributed by Trp-17. 3 residues coordinate Zn(2+): His-48, His-52, and Asp-54. The active-site Proton donor/acceptor is the His-58. Residues His-161 and Glu-173 each coordinate Zn(2+).

The protein belongs to the Cyclase 1 superfamily. KynB family. As to quaternary structure, homodimer. Requires Zn(2+) as cofactor.

The enzyme catalyses N-formyl-L-kynurenine + H2O = L-kynurenine + formate + H(+). It participates in amino-acid degradation; L-tryptophan degradation via kynurenine pathway; L-kynurenine from L-tryptophan: step 2/2. In terms of biological role, catalyzes the hydrolysis of N-formyl-L-kynurenine to L-kynurenine, the second step in the kynurenine pathway of tryptophan degradation. The polypeptide is Kynurenine formamidase (Salinibacter ruber (strain DSM 13855 / M31)).